We begin with the raw amino-acid sequence, 160 residues long: NADH-quinone oxidoreductase subunit B (160 aa).

Positions 37, 38, 102, and 132 each coordinate [4Fe-4S] cluster.

The protein belongs to the complex I 20 kDa subunit family. In terms of assembly, NDH-1 is composed of 14 different subunits. Subunits NuoB, C, D, E, F, and G constitute the peripheral sector of the complex. [4Fe-4S] cluster is required as a cofactor.

The protein localises to the cell inner membrane. It catalyses the reaction a quinone + NADH + 5 H(+)(in) = a quinol + NAD(+) + 4 H(+)(out). NDH-1 shuttles electrons from NADH, via FMN and iron-sulfur (Fe-S) centers, to quinones in the respiratory chain. Couples the redox reaction to proton translocation (for every two electrons transferred, four hydrogen ions are translocated across the cytoplasmic membrane), and thus conserves the redox energy in a proton gradient. This chain is NADH-quinone oxidoreductase subunit B, found in Neisseria meningitidis serogroup A / serotype 4A (strain DSM 15465 / Z2491).